We begin with the raw amino-acid sequence, 442 residues long: HTH-type transcriptional regulator NorG (442 aa).

In terms of domain architecture, HTH gntR-type spans 2 to 46; the sequence is KIPSHRQLAIQYNVNRVTIIKSIELLEAEGFIYTKVGSGTYVNDY. A DNA-binding region (H-T-H motif) is located at residues 6-25; the sequence is HRQLAIQYNVNRVTIIKSIE. Lys-288 carries the N6-(pyridoxal phosphate)lysine modification.

It in the C-terminal section; belongs to the class-I pyridoxal-phosphate-dependent aminotransferase family. Pyridoxal 5'-phosphate serves as cofactor.

Its function is as follows. Positively regulates the expression of the NorB efflux pump and negatively regulates the expression of the AbcA efflux pump. Binds specifically to the promoters of norA, norB and norC and abcA genes. Could also have an aminotransferase activity. This is HTH-type transcriptional regulator NorG (norG) from Staphylococcus aureus (strain USA300).